The sequence spans 119 residues: Nascent polypeptide-associated complex protein (119 aa).

The NAC-A/B domain occupies 5 to 73 (RMNSREMRRL…FRETPKKQEG (69 aa)).

This sequence belongs to the NAC-alpha family. Homodimer. Interacts with the ribosome. Binds ribosomal RNA.

Contacts the emerging nascent chain on the ribosome. The chain is Nascent polypeptide-associated complex protein from Thermoplasma volcanium (strain ATCC 51530 / DSM 4299 / JCM 9571 / NBRC 15438 / GSS1).